The primary structure comprises 118 residues: Cell division protein FtsB (118 aa).

Over 1–6 (MRNWRW) the chain is Cytoplasmic. A helical membrane pass occupies residues 7 to 24 (LLLVLAALLSWLQHRFWF). The Periplasmic portion of the chain corresponds to 25-118 (GPGNSGEVRM…DLAQPRREKR (94 aa)). A coiled-coil region spans residues 30–66 (GEVRMLQVQIVQQHQENERLRQRNASLAAEVKNLKDG). A disordered region spans residues 97–118 (PLPNDTSADHGVDLAQPRREKR). A compositionally biased stretch (basic and acidic residues) spans 103–118 (SADHGVDLAQPRREKR).

It belongs to the FtsB family. As to quaternary structure, part of a complex composed of FtsB, FtsL and FtsQ.

It is found in the cell inner membrane. Its function is as follows. Essential cell division protein. May link together the upstream cell division proteins, which are predominantly cytoplasmic, with the downstream cell division proteins, which are predominantly periplasmic. The chain is Cell division protein FtsB from Xylella fastidiosa (strain 9a5c).